The following is a 328-amino-acid chain: Oligopeptide transport ATP-binding protein AppD (328 aa).

The region spanning 5-256 (LEVNNLKTYF…PLHPYTEGLL (252 aa)) is the ABC transporter domain. Residue 41-48 (GESGSGKS) participates in ATP binding.

Belongs to the ABC transporter superfamily.

It is found in the cell membrane. Its function is as follows. This protein is a component of an oligopeptide permease, a binding protein-dependent transport system. This APP system can completely substitute for the OPP system in both sporulation and genetic competence, though, unlike OPP, is incapable of transporting tripeptides. Probably responsible for energy coupling to the transport system. The chain is Oligopeptide transport ATP-binding protein AppD (appD) from Bacillus subtilis (strain 168).